The following is a 248-amino-acid chain: 2,3-bisphosphoglycerate-dependent phosphoglycerate mutase (248 aa).

Residues 9–16 (RHGHSEWN), 22–23 (TG), arginine 61, 88–91 (ERHY), lysine 99, 115–116 (RR), and 183–184 (GN) contribute to the substrate site. Catalysis depends on histidine 10, which acts as the Tele-phosphohistidine intermediate. Glutamate 88 acts as the Proton donor/acceptor in catalysis.

This sequence belongs to the phosphoglycerate mutase family. BPG-dependent PGAM subfamily.

It catalyses the reaction (2R)-2-phosphoglycerate = (2R)-3-phosphoglycerate. It participates in carbohydrate degradation; glycolysis; pyruvate from D-glyceraldehyde 3-phosphate: step 3/5. Its function is as follows. Catalyzes the interconversion of 2-phosphoglycerate and 3-phosphoglycerate. The sequence is that of 2,3-bisphosphoglycerate-dependent phosphoglycerate mutase from Arthrobacter sp. (strain FB24).